We begin with the raw amino-acid sequence, 270 residues long: Carboxy-terminal domain RNA polymerase II polypeptide A small phosphatase 2 (270 aa).

At Ser5 the chain carries Phosphoserine. The FCP1 homology domain occupies 96–254 (QDQGRICVVI…LNLIPVFEEL (159 aa)). The active-site 4-aspartylphosphate intermediate is the Asp106. Residues Asp106, Asp108, and Asn217 each coordinate Mg(2+). Asp108 acts as the Proton donor in catalysis.

In terms of assembly, monomer. Interacts with REST. Mg(2+) is required as a cofactor. Expression is restricted to non-neuronal tissues.

It localises to the nucleus. It carries out the reaction O-phospho-L-seryl-[protein] + H2O = L-seryl-[protein] + phosphate. The catalysed reaction is O-phospho-L-threonyl-[protein] + H2O = L-threonyl-[protein] + phosphate. Functionally, preferentially catalyzes the dephosphorylation of 'Ser-5' within the tandem 7 residue repeats in the C-terminal domain (CTD) of the largest RNA polymerase II subunit POLR2A. Negatively regulates RNA polymerase II transcription, possibly by controlling the transition from initiation/capping to processive transcript elongation. Recruited by REST to neuronal genes that contain RE-1 elements, leading to neuronal gene silencing in non-neuronal cells. This Mus musculus (Mouse) protein is Carboxy-terminal domain RNA polymerase II polypeptide A small phosphatase 2 (Ctdsp2).